Here is a 1481-residue protein sequence, read N- to C-terminus: Cystic fibrosis transmembrane conductance regulator (1481 aa).

Topologically, residues Met1–Phe77 are cytoplasmic. Residues Phe78–Gln98 form a helical membrane-spanning segment. Positions Phe81–Leu365 constitute an ABC transmembrane type-1 1 domain. Topologically, residues Pro99–Tyr122 are extracellular. A helical transmembrane segment spans residues Leu123–His146. Over His147–Leu195 the chain is Cytoplasmic. The chain crosses the membrane as a helical span at residues Ala196 to Trp216. Residues Asp217 to Ser222 lie on the Extracellular side of the membrane. A helical membrane pass occupies residues Ala223–Met243. Residues Met244–Lys298 are Cytoplasmic-facing. A helical transmembrane segment spans residues Ala299–Phe319. The Extracellular segment spans residues Leu320–Thr339. The helical transmembrane segment at Ile340 to Val358 threads the bilayer. Topologically, residues Gln359–Ser858 are cytoplasmic. ATP is bound by residues Trp401, Ser433, Gly457 to Thr464, and Gln492. The 224-residue stretch at Asn422–Gly645 folds into the ABC transporter 1 domain. Residue Cys523 is the site of S-palmitoyl cysteine attachment. 2 positions are modified to phosphoserine: Ser548 and Ser659. A disordered R region region spans residues Ser653–Glu831. At Ser669 the chain carries Phosphoserine; by PKA. Phosphoserine is present on Ser685. Lys687 participates in a covalent cross-link: Glycyl lysine isopeptide (Lys-Gly) (interchain with G-Cter in ubiquitin). Residues Ser699 and Ser711 each carry the phosphoserine modification. Thr716 carries the post-translational modification Phosphothreonine. Residues Ser736, Ser767, Ser790, Ser795, and Ser813 each carry the phosphoserine modification. The helical transmembrane segment at Leu859–Val879 threads the bilayer. Residues Leu859–Ser1155 form the ABC transmembrane type-1 2 domain. The Extracellular segment spans residues Val880–Ile918. N-linked (GlcNAc...) asparagine glycans are attached at residues Asn894 and Asn900. Residues Tyr919–His939 form a discontinuously helical membrane-spanning segment. Over Thr940–Thr990 the chain is Cytoplasmic. A helical transmembrane segment spans residues Ile991–Leu1011. The Extracellular portion of the chain corresponds to Gln1012–Pro1013. The helical transmembrane segment at Tyr1014–Leu1034 threads the bilayer. At His1035 to Thr1095 the chain is on the cytoplasmic side. The chain crosses the membrane as a helical span at residues Leu1096–Phe1116. At Ile1117–Gly1130 the chain is on the extracellular side. Residues Ile1131–Ile1151 form a helical membrane-spanning segment. The Cytoplasmic portion of the chain corresponds to Asp1152–Leu1481. The ABC transporter 2 domain occupies Met1211–Ser1444. ATP contacts are provided by residues Tyr1220 and Gly1245–Ser1252. The segment at Arg1387–Leu1481 is interaction with GORASP2. Cys1396 carries the S-palmitoyl cysteine lipid modification. 2 positions are modified to phosphoserine: Ser1445 and Ser1457. Residues Lys1449–Leu1481 form a disordered region. Residues Phe1451–Ser1463 show a composition bias toward basic residues. A compositionally biased stretch (acidic residues) spans Glu1470–Leu1481. The PDZ-binding motif lies at Thr1479 to Leu1481.

It belongs to the ABC transporter superfamily. ABCC family. CFTR transporter (TC 3.A.1.202) subfamily. Monomer; does not require oligomerization for channel activity. May form oligomers in the membrane. Interacts with SLC26A3, SLC26A6 and NHERF1. Interacts with SHANK2. Interacts with MYO6. Interacts (via C-terminus) with GOPC (via PDZ domain); this promotes CFTR internalization and thereby decreases channel activity. Interacts with SLC4A7 through NHERF1. Found in a complex with MYO5B and RAB11A. Interacts with ANO1. Interacts with SLC26A8. Interacts with AHCYL1; the interaction increases CFTR activity. Interacts with CSE1L. The core-glycosylated form interacts with GORASP2 (via PDZ GRASP-type 1 domain) in respone to ER stress. Interacts with MARCHF2; the interaction leads to CFTR ubiqtuitination and degradation. Interacts with ADGRG2. N-glycosylated. Post-translationally, phosphorylated; cAMP treatment promotes phosphorylation and activates the channel. Dephosphorylation decreases the ATPase activity (in vitro). Phosphorylation at PKA sites activates the channel. Phosphorylation at PKC sites enhances the response to phosphorylation by PKA. Phosphorylated by AMPK; this inhibits channel activity. In terms of processing, ubiquitinated, leading to its degradation in the lysosome. Deubiquitination by USP10 in early endosomes enhances its endocytic recycling to the cell membrane. Ubiquitinated by RNF185 during ER stress. Ubiquitinated by MARCHF2.

The protein resides in the apical cell membrane. The protein localises to the early endosome membrane. It is found in the cell membrane. It localises to the recycling endosome membrane. Its subcellular location is the endoplasmic reticulum membrane. The protein resides in the nucleus. The enzyme catalyses ATP + H2O + closed Cl(-) channel = ADP + phosphate + open Cl(-) channel.. The catalysed reaction is chloride(in) = chloride(out). It carries out the reaction hydrogencarbonate(in) = hydrogencarbonate(out). It catalyses the reaction ATP + H2O = ADP + phosphate + H(+). Its function is as follows. Epithelial ion channel that plays an important role in the regulation of epithelial ion and water transport and fluid homeostasis. Mediates the transport of chloride ions across the cell membrane. Possesses an intrinsic ATPase activity and utilizes ATP to gate its channel; the passive flow of anions through the channel is gated by cycles of ATP binding and hydrolysis by the ATP-binding domains. The ion channel is also permeable to HCO(3)(-); selectivity depends on the extracellular chloride concentration. Exerts its function also by modulating the activity of other ion channels and transporters. Contributes to the regulation of the pH and the ion content of the epithelial fluid layer. Modulates the activity of the epithelial sodium channel (ENaC) complex, in part by regulating the cell surface expression of the ENaC complex. May regulate bicarbonate secretion and salvage in epithelial cells by regulating the transporter SLC4A7. Can inhibit the chloride channel activity of ANO1. Plays a role in the chloride and bicarbonate homeostasis during sperm epididymal maturation and capacitation. The chain is Cystic fibrosis transmembrane conductance regulator from Equus caballus (Horse).